A 931-amino-acid chain; its full sequence is Netrin receptor UNC5C (931 aa).

The first 40 residues, 1-40 (MRKGLRATAARCGLGLGYLLQMLVLPALALLSASGTGSAA), serve as a signal peptide directing secretion. Topologically, residues 41 to 380 (QDDDFFHELP…APDSDDVALY (340 aa)) are extracellular. The Ig-like domain maps to 62–159 (PHFLIEPEEA…AGTTKSRKAY (98 aa)). 9 disulfides stabilise this stretch: Cys-83–Cys-144, Cys-95–Cys-142, Cys-188–Cys-239, Cys-272–Cys-309, Cys-276–Cys-313, Cys-287–Cys-299, Cys-328–Cys-362, Cys-332–Cys-367, and Cys-340–Cys-352. Positions 161–256 (RIAYLRKTFE…KRKSTTATVI (96 aa)) constitute an Ig-like C2-type domain. An N-linked (GlcNAc...) asparagine glycan is attached at Asn-236. TSP type-1 domains are found at residues 260–314 (NGGW…TLCP) and 316–368 (DGRW…GLCM). N-linked (GlcNAc...) asparagine glycosylation is present at Asn-361. Residues 381–401 (VGIVIAVTVCLAITVVVALFV) form a helical membrane-spanning segment. Topologically, residues 402–931 (YRKNHRDFES…VVSLAAEGQY (530 aa)) are cytoplasmic. The interval 402–931 (YRKNHRDFES…VVSLAAEGQY (530 aa)) is required for netrin-mediated axon repulsion of neuronal growth cones. Phosphoserine is present on Ser-502. Residues 530-673 (CTAFGTFNSL…LSTYALVGQS (144 aa)) form the ZU5 domain. Residue Tyr-568 is modified to Phosphotyrosine. Residues 694–712 (SLEYSIRVYCLDDTQDALK) form an interaction with DCC region. Positions 850–929 (QKLCSSLDAP…ETVVSLAAEG (80 aa)) constitute a Death domain.

This sequence belongs to the unc-5 family. As to quaternary structure, interacts with DCC (via cytoplasmic domain). Interacts (tyrosine phosphorylated form) with PTPN11. Interacts (via extracellular domain) with FLRT3 (via extracellular domain). Interacts (via Ig-like C2-type domain) with DSCAM (via extracellular domain). Interacts (via death domain) with DAPK1. Interacts (via cytoplasmic domain) with TUBB3; this interaction is decreased by NTN1/Netrin-1. In terms of processing, proteolytically cleaved by caspases during apoptosis. The cleavage does not take place when the receptor is associated with netrin ligand. Its cleavage by caspases is required to induce apoptosis. Post-translationally, phosphorylated on different cytoplasmic tyrosine residues. Phosphorylation of Tyr-568 leads to an interaction with PTPN11 phosphatase, suggesting that its activity is regulated by phosphorylation/dephosphorylation. Tyrosine phosphorylation is netrin-dependent. In terms of tissue distribution, detected in brain (at protein level). Mainly expressed in brain. Also expressed in kidney. Not expressed in developing or adult lung.

The protein resides in the cell membrane. It localises to the cell surface. The protein localises to the synapse. It is found in the synaptosome. Its subcellular location is the cell projection. The protein resides in the axon. It localises to the dendrite. The protein localises to the growth cone. It is found in the lamellipodium. Its subcellular location is the filopodium. Receptor for netrin required for axon guidance. Mediates axon repulsion of neuronal growth cones in the developing nervous system upon ligand binding. NTN1/Netrin-1 binding might cause dissociation of UNC5C from polymerized TUBB3 in microtubules and thereby lead to increased microtubule dynamics and axon repulsion. Axon repulsion in growth cones may also be caused by its association with DCC that may trigger signaling for repulsion. Might also collaborate with DSCAM in NTN1-mediated axon repulsion independently of DCC. Also involved in corticospinal tract axon guidance independently of DCC. Involved in dorsal root ganglion axon projection towards the spinal cord. It also acts as a dependence receptor required for apoptosis induction when not associated with netrin ligand. The protein is Netrin receptor UNC5C (Unc5c) of Rattus norvegicus (Rat).